Here is a 181-residue protein sequence, read N- to C-terminus: Isopentenyl-diphosphate Delta-isomerase (181 aa).

Residues His25 and His32 each coordinate Mn(2+). One can recognise a Nudix hydrolase domain in the interval 30-164; the sequence is PLHLAFSCWL…PWAFSPWMVM (135 aa). Cys67 is an active-site residue. Mn(2+) is bound at residue His69. Glu87 is a Mg(2+) binding site. Positions 114 and 116 each coordinate Mn(2+). The active site involves Glu116.

It belongs to the IPP isomerase type 1 family. As to quaternary structure, homodimer. Requires Mg(2+) as cofactor. The cofactor is Mn(2+).

It localises to the cytoplasm. It carries out the reaction isopentenyl diphosphate = dimethylallyl diphosphate. It functions in the pathway isoprenoid biosynthesis; dimethylallyl diphosphate biosynthesis; dimethylallyl diphosphate from isopentenyl diphosphate: step 1/1. Functionally, catalyzes the 1,3-allylic rearrangement of the homoallylic substrate isopentenyl (IPP) to its highly electrophilic allylic isomer, dimethylallyl diphosphate (DMAPP). The polypeptide is Isopentenyl-diphosphate Delta-isomerase (Salmonella agona (strain SL483)).